Consider the following 490-residue polypeptide: Bifunctional NAD(P)H-hydrate repair enzyme Nnr (490 aa).

Positions 1–204 (MKEIDELTIK…NIGHPVHLIN (204 aa)) constitute a YjeF N-terminal domain. The segment at 1–204 (MKEIDELTIK…NIGHPVHLIN (204 aa)) is NAD(P)H-hydrate epimerase. Residues 51 to 55 (NNGGD) form an NADPHX 1; for epimerase activity region. 2 residues coordinate K(+): asparagine 52 and aspartate 114. An NADPHX 1; for epimerase activity region spans residues 118–124 (GTGLRGE). Residues tyrosine 129 and aspartate 147 each coordinate (6S)-NADPHX. Serine 150 serves as a coordination point for K(+). A YjeF C-terminal domain is found at 212 to 488 (TREMVRSLLP…RLIPEAIRRL (277 aa)). The ADP-dependent (S)-NAD(P)H-hydrate dehydratase stretch occupies residues 212-490 (TREMVRSLLP…IPEAIRRLKE (279 aa)). Glycine 317 is a binding site for (6S)-NADPHX. The NADPHX 2; for dehydratase activity stretch occupies residues 366 to 372 (HPGEMAR). ADP is bound by residues 402–406 (KSATT) and 421–430 (NTGLSKGGSG). Aspartate 431 is a binding site for (6S)-NADPHX.

It in the N-terminal section; belongs to the NnrE/AIBP family. The protein in the C-terminal section; belongs to the NnrD/CARKD family. Requires K(+) as cofactor.

The enzyme catalyses (6S)-NADHX + ADP = AMP + phosphate + NADH + H(+). It catalyses the reaction (6S)-NADPHX + ADP = AMP + phosphate + NADPH + H(+). The catalysed reaction is (6R)-NADHX = (6S)-NADHX. It carries out the reaction (6R)-NADPHX = (6S)-NADPHX. Its function is as follows. Bifunctional enzyme that catalyzes the epimerization of the S- and R-forms of NAD(P)HX and the dehydration of the S-form of NAD(P)HX at the expense of ADP, which is converted to AMP. This allows the repair of both epimers of NAD(P)HX, a damaged form of NAD(P)H that is a result of enzymatic or heat-dependent hydration. The sequence is that of Bifunctional NAD(P)H-hydrate repair enzyme Nnr (nnr) from Thermotoga maritima (strain ATCC 43589 / DSM 3109 / JCM 10099 / NBRC 100826 / MSB8).